A 196-amino-acid polypeptide reads, in one-letter code: MLIAWLVLAATLSRSIRASTTISIPITTQDIIAGDVFFEILSPSELEYTYRLRPAKDFGSAFSERLEGVPLVITDPPGACQEIRNARDLNGGVALIDRGECSFLTKTLRAEAAGALAAIITEYNPSSPEFEHYIEMIHDNSQQDANIPAGFLLGKNGVIIRSTLQRLKRVHALINIPVNLTFTPPSKINHPPWLGW.

Residues Met-1–Ala-18 form the signal peptide. Residues Ile-73–His-171 enclose the PA domain. Residue Asn-179 is glycosylated (N-linked (GlcNAc...) asparagine).

The protein resides in the secreted. Its function is as follows. May be involved in iversification of muscle cell fates. In Drosophila melanogaster (Fruit fly), this protein is PRADC1-like protein.